Reading from the N-terminus, the 118-residue chain is uncharacterized protein (118 aa).

This is an uncharacterized protein from Rickettsia prowazekii (strain Madrid E).